A 412-amino-acid chain; its full sequence is Early growth response protein 2b (412 aa).

Positions 269 to 299 (YTPQNLPLRPILRPRKYPNRPSKTPVHERPY) are disordered. 3 consecutive C2H2-type zinc fingers follow at residues 299-323 (YPCPAEGCDRRFSRSDELTRHIRIH), 329-351 (FQCRICMRNFSRSDHLTTHIRTH), and 357-379 (FACDFCGRKFARSDERKRHTKIH). Positions 371 to 412 (ERKRHTKIHLRQKERKSSSSSTGVSSSERGVATSICSSSSNQ) are disordered. The segment covering 374–384 (RHTKIHLRQKE) has biased composition (basic residues). Low complexity predominate over residues 388 to 401 (SSSSTGVSSSERGV).

This sequence belongs to the EGR C2H2-type zinc-finger protein family.

It localises to the nucleus. Its function is as follows. Sequence-specific DNA-binding transcription factor. Binds to two specific DNA sites located in the promoter region of HOXA4. The sequence is that of Early growth response protein 2b (egr2b) from Danio rerio (Zebrafish).